The following is a 431-amino-acid chain: Protein EARLY STARVATION 1, chloroplastic (431 aa).

Residues 1-19 constitute a chloroplast transit peptide; the sequence is MAACSRGLVARPFDLTARG. Disordered regions lie at residues 65–126 and 403–431; these read GNKP…DTGI and GVYPTIDFSASSPAPPSDDPPGMPPSPLE. The span at 415 to 431 shows a compositional bias: pro residues; sequence PAPPSDDPPGMPPSPLE.

The protein belongs to the ESV1 family.

The protein localises to the plastid. Its subcellular location is the chloroplast stroma. In terms of biological role, binds preferentially to highly ordered alpha-glucans, such as starch and crystalline maltodextrins. Involved in the organization of the starch granule matrix, thus influencing starch turnover by modulating the accessibility of starch polymers to modifying and degrading enzymes. Required for the control of starch degradation in leaves and starch distribution in nonphotosynthetic parts. Promotes gravitropic responses, negative in shoots but positive in roots, by facilitating starch granules (statoliths) formation in hypocotyls and roots columella. Facilitates tight packing of starch granules in grains. The protein is Protein EARLY STARVATION 1, chloroplastic of Oryza sativa subsp. indica (Rice).